Reading from the N-terminus, the 65-residue chain is Large ribosomal subunit protein bL32 (65 aa).

This sequence belongs to the bacterial ribosomal protein bL32 family.

This is Large ribosomal subunit protein bL32 (rpmF) from Rickettsia prowazekii (strain Madrid E).